The chain runs to 212 residues: MASRRGALIVLEGVDRAGKTTQGLKLVTALCASGHRAELLRFPERSTEIGKLLNSYLEKKTELEDHSVHLLFSANRWEQVPLIKAKLNQGVTLVLDRYAFSGVAFTGAKENFSLDWCKQPDVGLPKPDLILFLQLQLLDAAARGEFGLERYETGTFQKQVLLCFQQLMEEKNLNWKVVDASKSIEEVHKEIRAHSEDAIRNAAQRPLGELWK.

Position 2 is an N-acetylalanine (alanine 2). Residues 16-21 (RAGKTT) and arginine 97 contribute to the ATP site. The tract at residues 133 to 157 (LQLQLLDAAARGEFGLERYETGTFQ) is LID. ATP-binding residues include lysine 182 and arginine 192.

The protein belongs to the thymidylate kinase family. As to quaternary structure, homodimer. It depends on Mg(2+) as a cofactor.

The catalysed reaction is dTMP + ATP = dTDP + ADP. It participates in pyrimidine metabolism; dTTP biosynthesis. Its function is as follows. Catalyzes the phosphorylation of thymidine monophosphate (dTMP) to thymidine diphosphate (dTDP), the immediate precursor for the DNA building block dTTP, with ATP as the preferred phosphoryl donor in the presence of Mg(2+). The protein is Thymidylate kinase (Dtymk) of Mus musculus (Mouse).